The sequence spans 101 residues: Integration host factor subunit alpha (101 aa).

The protein belongs to the bacterial histone-like protein family. Heterodimer of an alpha and a beta chain.

Its function is as follows. This protein is one of the two subunits of integration host factor, a specific DNA-binding protein that functions in genetic recombination as well as in transcriptional and translational control. This Halorhodospira halophila (strain DSM 244 / SL1) (Ectothiorhodospira halophila (strain DSM 244 / SL1)) protein is Integration host factor subunit alpha.